The following is a 250-amino-acid chain: MGAAASIQTTVNTLSERISSKLEQEANASAQTKCDIEIGNFYIRQNHGCNLTVKNMCSADADAQLDAVLSAATETYSGLTPEQKAYVPAMFTAALNIQTSVNTVVRDFENYVKQTCNSSAVVDNKLKIQNVIIDECYGAPGSPTNLEFINTGSSKGNCAIKALMQLTTKATTQIAPRQVAGTGVQFYMIVIGVIILAALFMYYAKRMLFTSTNDKIKLILANKENVHWTTYMDTFFRTSPMVIATTDMQN.

The N-myristoyl glycine; by host moiety is linked to residue G2. The segment at 2–12 (GAAASIQTTVN) is targeting to MV membrane. Residues 2-183 (GAAASIQTTV…IAPRQVAGTG (182 aa)) are Virion surface-facing. Intrachain disulfides connect C34–C57, C49–C136, and C116–C158. The helical transmembrane segment at 184-204 (VQFYMIVIGVIILAALFMYYA) threads the bilayer. Residues 205–250 (KRMLFTSTNDKIKLILANKENVHWTTYMDTFFRTSPMVIATTDMQN) lie on the Intravirion side of the membrane.

It belongs to the orthopoxvirus OPG095 family. Component of the entry fusion complex (EFC) composed of OPG053, OPG076, OPG086, OPG094, OPG095, OPG099, OPG107, OPG143, OPG104, OPG147 and OPG155. Except for OPG095 and OPG053, each of the EFC proteins is required for assembly or stability of the complex. Post-translationally, myristoylated. Disulfid bonds are oxidized in the cytoplasm by OPG088 protein. In terms of processing, unglycosylated because produced in viral factories instead of the classic ER -Golgi route.

The protein localises to the virion membrane. In terms of biological role, component of the entry fusion complex (EFC), which consists of 11 proteins. During cell infection, this complex mediates entry of the virion core into the host cytoplasm by a two-step mechanism consisting of lipid mixing of the viral and cellular membranes and subsequent pore formation. This chain is Entry-fusion complex associated protein OPG095 (OPG099), found in Homo sapiens (Human).